Consider the following 271-residue polypeptide: Bifunctional protein FolD (271 aa).

Residues Gly-154–Ser-156, Ser-181, and Ile-222 each bind NADP(+).

The protein belongs to the tetrahydrofolate dehydrogenase/cyclohydrolase family. In terms of assembly, homodimer.

The catalysed reaction is (6R)-5,10-methylene-5,6,7,8-tetrahydrofolate + NADP(+) = (6R)-5,10-methenyltetrahydrofolate + NADPH. It carries out the reaction (6R)-5,10-methenyltetrahydrofolate + H2O = (6R)-10-formyltetrahydrofolate + H(+). It functions in the pathway one-carbon metabolism; tetrahydrofolate interconversion. Catalyzes the oxidation of 5,10-methylenetetrahydrofolate to 5,10-methenyltetrahydrofolate and then the hydrolysis of 5,10-methenyltetrahydrofolate to 10-formyltetrahydrofolate. This Thermotoga maritima (strain ATCC 43589 / DSM 3109 / JCM 10099 / NBRC 100826 / MSB8) protein is Bifunctional protein FolD.